The primary structure comprises 1350 residues: ABC transporter C family member 13 (1350 aa).

In terms of domain architecture, ABC transmembrane type-1 1 spans 107–390 (NKKSIFIVIL…LPEAIHNLLG (284 aa)). 4 helical membrane-spanning segments follow: residues 111 to 131 (IFIVILCAIFSILSPLCLKYF), 143 to 163 (TFLTGLGYCVLLFVGTFSYTL), 215 to 235 (IGLFADFFWIGHLEIIIFPIQ), and 240 to 260 (LALLCWIVGWSGLVGFGVMII). The tract at residues 462–481 (EKSEEEYETTTTTTDDNNNN) is disordered. The span at 470-481 (TTTTTTDDNNNN) shows a compositional bias: low complexity. The 221-residue stretch at 473 to 693 (TTTDDNNNNN…IDFESIMKTK (221 aa)) folds into the ABC transporter 1 domain. 505 to 512 (GVVGSGKT) lines the ATP pocket. An ABC transmembrane type-1 2 domain is found at 774–1061 (KHGSSTFFFI…FVELEVKMNS (288 aa)). 6 helical membrane passes run 776–796 (GSSTFFFIATCVVYFFSQAIF), 816–836 (DSFYIFYYIIFIGLFIVTLVI), 887–907 (IDLLLYDLFSDVLYCGSTVVF), 909–929 (ICVMIYISPLISLPFLVLIIV), 1003–1023 (IGVRLEFISALVVFLTAFFSL), and 1029–1049 (GFSVLSVTTAIGMCTYLNWAV). An ABC transporter 2 domain is found at 1103–1337 (IEFRDVEIRY…KNSKFSKLVK (235 aa)). 1137–1144 (GRTGAGKS) is a binding site for ATP.

It belongs to the ABC transporter superfamily. ABCC family. Conjugate transporter (TC 3.A.1.208) subfamily.

The protein localises to the membrane. The sequence is that of ABC transporter C family member 13 (abcC13) from Dictyostelium discoideum (Social amoeba).